Here is a 224-residue protein sequence, read N- to C-terminus: Oxalate oxidase 2 (224 aa).

A signal peptide spans Met-1–Ala-23. Cys-33 and Cys-49 are joined by a disulfide. The 152-residue stretch at Ser-63–Glu-214 folds into the Cupin type-1 domain. Asn-70 and Asn-75 each carry an N-linked (GlcNAc...) asparagine glycan. Mn(2+) contacts are provided by His-111, His-113, Glu-118, and His-160.

It belongs to the germin family. As to quaternary structure, oligomer (believed to be a pentamer but probably hexamer). In terms of processing, glycosylated. A form called G contains antennary GlcNAc residues, whereas a form called G' lacks antennary GlcNAc residues in its otherwise identical glycans. Root.

The protein resides in the secreted. It localises to the extracellular space. Its subcellular location is the apoplast. The protein localises to the cell wall. It carries out the reaction oxalate + O2 + 2 H(+) = H2O2 + 2 CO2. Its function is as follows. Releases hydrogen peroxide in the apoplast. May play an important role in several aspects of plant growth and defense mechanisms. In Hordeum vulgare (Barley), this protein is Oxalate oxidase 2.